Reading from the N-terminus, the 356-residue chain is Red-sensitive opsin-2 (356 aa).

The Extracellular portion of the chain corresponds to 1 to 48 (MAEWANAAFAARRRGDETTRDNAFSYTNSNNTRDPFEGPNYHIAPRWV). Asparagine 30 carries an N-linked (GlcNAc...) asparagine glycan. A helical transmembrane segment spans residues 49–73 (YNVATVWMFFVVVASTFTNGLVLVA). Topologically, residues 74-85 (TAKFKKLRHPLN) are cytoplasmic. Residues 86-111 (WILVNLAIADLGETLFASTISVINQV) traverse the membrane as a helical segment. At 112–125 (FGYFILGHPMCIFE) the chain is on the extracellular side. Residues cysteine 122 and cysteine 199 are joined by a disulfide bond. Residues 126–145 (GYTVSVCGIAGLWSLTVISW) form a helical membrane-spanning segment. Topologically, residues 146–164 (ERWVVVCKPFGNVKFDGKW) are cytoplasmic. Residues 165–188 (ASAGIIFSWVWAAVWCAPPIFGWS) traverse the membrane as a helical segment. Residues 189–214 (RYWPHGLKTSCGPDVFGGNEDPGVQS) are Extracellular-facing. A helical transmembrane segment spans residues 215 to 242 (YMLVLMITCCILPLAIIILCYIAVFLAI). Residues 243–264 (HAVAQQQKDSESTQKAEKEVSR) lie on the Cytoplasmic side of the membrane. Residues 265 to 288 (MVVVMILAFCLCWGPYTAFACFAA) traverse the membrane as a helical segment. Topologically, residues 289-296 (ANPGYAFH) are extracellular. Residues 297 to 321 (PLAAAMPAYFAKSATIYNPIIYVFM) form a helical membrane-spanning segment. Residue lysine 308 is modified to N6-(retinylidene)lysine. The Cytoplasmic portion of the chain corresponds to 322-356 (NRQFRVCIMQLFGKKVDDGSEVSTSKTEVSSVAPA).

Belongs to the G-protein coupled receptor 1 family. Opsin subfamily. In terms of processing, phosphorylated on some or all of the serine and threonine residues present in the C-terminal region.

Its subcellular location is the membrane. Visual pigments are the light-absorbing molecules that mediate vision. They consist of an apoprotein, opsin, covalently linked to cis-retinal. This is Red-sensitive opsin-2 (opn1lw2) from Danio rerio (Zebrafish).